A 288-amino-acid polypeptide reads, in one-letter code: 4-diphosphocytidyl-2-C-methyl-D-erythritol kinase (288 aa).

Residue Lys8 is part of the active site. Position 90–100 (90–100 (PVGAGLAGGSS)) interacts with ATP. Asp132 is an active-site residue.

It belongs to the GHMP kinase family. IspE subfamily.

The enzyme catalyses 4-CDP-2-C-methyl-D-erythritol + ATP = 4-CDP-2-C-methyl-D-erythritol 2-phosphate + ADP + H(+). The protein operates within isoprenoid biosynthesis; isopentenyl diphosphate biosynthesis via DXP pathway; isopentenyl diphosphate from 1-deoxy-D-xylulose 5-phosphate: step 3/6. Its function is as follows. Catalyzes the phosphorylation of the position 2 hydroxy group of 4-diphosphocytidyl-2C-methyl-D-erythritol. The sequence is that of 4-diphosphocytidyl-2-C-methyl-D-erythritol kinase from Chlamydia trachomatis serovar D (strain ATCC VR-885 / DSM 19411 / UW-3/Cx).